A 318-amino-acid polypeptide reads, in one-letter code: Putative 2-hydroxyacid dehydrogenase SSP0606 (318 aa).

Residues 156 to 157 (EI), 235 to 237 (ASR), and Asp-261 each bind NAD(+). The active site involves Arg-237. Glu-266 is a catalytic residue. His-284 (proton donor) is an active-site residue. 284-287 (HIGN) is an NAD(+) binding site.

It belongs to the D-isomer specific 2-hydroxyacid dehydrogenase family.

This chain is Putative 2-hydroxyacid dehydrogenase SSP0606, found in Staphylococcus saprophyticus subsp. saprophyticus (strain ATCC 15305 / DSM 20229 / NCIMB 8711 / NCTC 7292 / S-41).